The primary structure comprises 98 residues: NADH-ubiquinone oxidoreductase chain 4L (98 aa).

3 helical membrane-spanning segments follow: residues 1 to 21 (MPYIYMNITLAFVISLIGTLM), 29 to 49 (SLLCLEGMLLSLFTLNALLSL), and 61 to 81 (LILLVFAACEAAVGLALLVMI).

The protein belongs to the complex I subunit 4L family. Core subunit of respiratory chain NADH dehydrogenase (Complex I) which is composed of 45 different subunits.

The protein resides in the mitochondrion inner membrane. The enzyme catalyses a ubiquinone + NADH + 5 H(+)(in) = a ubiquinol + NAD(+) + 4 H(+)(out). Functionally, core subunit of the mitochondrial membrane respiratory chain NADH dehydrogenase (Complex I) which catalyzes electron transfer from NADH through the respiratory chain, using ubiquinone as an electron acceptor. Part of the enzyme membrane arm which is embedded in the lipid bilayer and involved in proton translocation. The sequence is that of NADH-ubiquinone oxidoreductase chain 4L (MT-ND4L) from Elephas maximus (Indian elephant).